The primary structure comprises 78 residues: Large ribosomal subunit protein bL28 (78 aa).

It belongs to the bacterial ribosomal protein bL28 family.

The protein is Large ribosomal subunit protein bL28 of Rippkaea orientalis (strain PCC 8801 / RF-1) (Cyanothece sp. (strain PCC 8801)).